Reading from the N-terminus, the 277-residue chain is Tryptophan synthase alpha chain (277 aa).

Active-site proton acceptor residues include Glu-59 and Asp-70.

This sequence belongs to the TrpA family. Tetramer of two alpha and two beta chains.

The enzyme catalyses (1S,2R)-1-C-(indol-3-yl)glycerol 3-phosphate + L-serine = D-glyceraldehyde 3-phosphate + L-tryptophan + H2O. Its pathway is amino-acid biosynthesis; L-tryptophan biosynthesis; L-tryptophan from chorismate: step 5/5. In terms of biological role, the alpha subunit is responsible for the aldol cleavage of indoleglycerol phosphate to indole and glyceraldehyde 3-phosphate. The chain is Tryptophan synthase alpha chain from Streptomyces avermitilis (strain ATCC 31267 / DSM 46492 / JCM 5070 / NBRC 14893 / NCIMB 12804 / NRRL 8165 / MA-4680).